A 396-amino-acid polypeptide reads, in one-letter code: Phosphoglycerate kinase (396 aa).

Substrate-binding positions include 19 to 21, arginine 34, 57 to 60, arginine 116, and arginine 153; these read DFN and HLGK. Residues lysine 204, glutamate 324, and 351–354 contribute to the ATP site; that span reads GGDT.

It belongs to the phosphoglycerate kinase family. Monomer.

The protein localises to the cytoplasm. It carries out the reaction (2R)-3-phosphoglycerate + ATP = (2R)-3-phospho-glyceroyl phosphate + ADP. Its pathway is carbohydrate degradation; glycolysis; pyruvate from D-glyceraldehyde 3-phosphate: step 2/5. This chain is Phosphoglycerate kinase, found in Maridesulfovibrio salexigens (strain ATCC 14822 / DSM 2638 / NCIMB 8403 / VKM B-1763) (Desulfovibrio salexigens).